The sequence spans 249 residues: Putative TrmH family tRNA/rRNA methyltransferase (249 aa).

Residues glycine 196, isoleucine 216, and leucine 225 each coordinate S-adenosyl-L-methionine.

Belongs to the class IV-like SAM-binding methyltransferase superfamily. RNA methyltransferase TrmH family.

In Staphylococcus haemolyticus (strain JCSC1435), this protein is Putative TrmH family tRNA/rRNA methyltransferase.